Reading from the N-terminus, the 500-residue chain is Melanopsin (500 aa).

The Extracellular segment spans residues 1 to 65 (MSHHSSWRGH…TVDVPDHAHY (65 aa)). Residue Asn-18 is glycosylated (N-linked (GlcNAc...) asparagine). The chain crosses the membrane as a helical span at residues 66–86 (IIGAVILIVGITGVIGNALVI). At 87–101 (YVFCRSRTLRTAGNM) the chain is on the cytoplasmic side. Residues 102 to 122 (FVVNLAVADFFMSLTQSPVFF) form a helical membrane-spanning segment. Topologically, residues 123–138 (AASLHRRWIFGERICE) are extracellular. A disulfide bridge links Cys-137 with Cys-215. Residues 139 to 159 (LYAFCGALFGICSMMTLTAIA) form a helical membrane-spanning segment. The Cytoplasmic portion of the chain corresponds to 160–182 (ADRCLAITQPLALVGNVSRRKAG). A helical membrane pass occupies residues 183–203 (AVLAVVWLYSLGWSLPPFFGW). Topologically, residues 204 to 232 (SAYVPEGLQTSCSWDYMTFTPSVRAYTIL) are extracellular. The helical transmembrane segment at 233-253 (LFIFVFFIPLGIIVSCYVGIF) threads the bilayer. Residues 254–286 (QAIRAMGKEIRELDCGETQKVYERMQNEWKMAK) lie on the Cytoplasmic side of the membrane. A helical transmembrane segment spans residues 287–307 (IALLVILLFVISWSPYSVVAL). The Extracellular portion of the chain corresponds to 308-322 (TATAGYSHLLTPYMN). The chain crosses the membrane as a helical span at residues 323 to 343 (SVPAVIAKASAIHNPIIYAIT). Lys-330 carries the post-translational modification N6-(retinylidene)lysine. Topologically, residues 344–500 (HPKYRAAIAR…DGKALLLGGN (157 aa)) are cytoplasmic. 3 disordered regions span residues 406–428 (GKKR…ADGS), 448–470 (VILS…AHKV), and 481–500 (ETDS…LGGN). Composition is skewed to polar residues over residues 411 to 428 (SSAS…ADGS) and 448 to 462 (VILS…ASGQ).

Belongs to the G-protein coupled receptor 1 family. Opsin subfamily. As to expression, expressed in a subset of retinal horizontal cells as well as in retinal ganglion cells.

The protein localises to the cell membrane. Functionally, photoreceptor implicated in non-image-forming responses to light. The protein is Melanopsin (opn4) of Rutilus rutilus (Roach).